The following is a 421-amino-acid chain: Serine--tRNA ligase (421 aa).

227–229 (TSE) lines the L-serine pocket. ATP is bound by residues 257 to 259 (RRE) and V273. Position 280 (E280) interacts with L-serine. 344–347 (ELTS) is an ATP binding site. Position 379 (T379) interacts with L-serine.

It belongs to the class-II aminoacyl-tRNA synthetase family. Type-1 seryl-tRNA synthetase subfamily. In terms of assembly, homodimer. The tRNA molecule binds across the dimer.

The protein resides in the cytoplasm. The catalysed reaction is tRNA(Ser) + L-serine + ATP = L-seryl-tRNA(Ser) + AMP + diphosphate + H(+). It catalyses the reaction tRNA(Sec) + L-serine + ATP = L-seryl-tRNA(Sec) + AMP + diphosphate + H(+). It functions in the pathway aminoacyl-tRNA biosynthesis; selenocysteinyl-tRNA(Sec) biosynthesis; L-seryl-tRNA(Sec) from L-serine and tRNA(Sec): step 1/1. Catalyzes the attachment of serine to tRNA(Ser). Is also able to aminoacylate tRNA(Sec) with serine, to form the misacylated tRNA L-seryl-tRNA(Sec), which will be further converted into selenocysteinyl-tRNA(Sec). This is Serine--tRNA ligase from Leifsonia xyli subsp. xyli (strain CTCB07).